A 562-amino-acid chain; its full sequence is Berberine bridge enzyme-like C-1 (562 aa).

An N-terminal signal peptide occupies residues 1–19 (MFPLIILISFSFTFLSASA). Asn29 and Asn41 each carry an N-linked (GlcNAc...) asparagine glycan. Residues Cys33 and Cys90 are joined by a disulfide bond. Residues 68–244 (NMPKPTVIIL…YAWKIRLVKV (177 aa)) form the FAD-binding PCMH-type domain. The residue at position 105 (His105) is a Pros-8alpha-FAD histidine. Asn359, Asn498, and Asn558 each carry an N-linked (GlcNAc...) asparagine glycan.

Belongs to the oxygen-dependent FAD-linked oxidoreductase family. It depends on FAD as a cofactor. Mostly expressed in roots.

It is found in the vacuole. It functions in the pathway alkaloid biosynthesis; nicotine biosynthesis. Its function is as follows. Involved in the biosynthesis of pyridine alkaloid natural products, leading mainly to the production of anabasine, anatabine, nicotine and nornicotine, effective deterrents against herbivores with antiparasitic and pesticide properties (neurotoxins); nornicotine serves as the precursor in the synthesis of the carcinogen compound N'-nitrosonornicotine (NNN). Catalyzes a late oxidation step subsequent to the pyridine ring condensation reaction in the biosynthesis of alkaloids. The sequence is that of Berberine bridge enzyme-like C-1 from Nicotiana tabacum (Common tobacco).